Here is a 197-residue protein sequence, read N- to C-terminus: uncharacterized protein (197 aa).

The signal sequence occupies residues 1–19 (MKLASLLVGSLMLAVPALA).

The protein localises to the secreted. This is an uncharacterized protein from Arthroderma benhamiae (strain ATCC MYA-4681 / CBS 112371) (Trichophyton mentagrophytes).